The primary structure comprises 560 residues: MFRYIEKEARDSITAALEKLGIKVPPEIKLEEPPNPQLGDLASTVSFELAGKLRRAPIEITADIMSVIETPEIFETIESKGPYINFFVDYGRFSSRLLESIQDDYGSHPPRDERVILEHTSANPNGPLHIGHIRNAIIGDSLARILRMAGYDVETQYYVNDMGRQIAMIVWGLLNLDGDLEDYPGDKMDHRVGKLYFEVNQRLKENPGIRDEVDELIRKYEAGENEELFRKVVEYCLSGMEETMKRLHVHHDRFVWEGQFVRDGTVDRVIESLRKTGYTGENDVLYLDLEEFGLEKELVLTRSDGTSLYSTRDIAYHLQKSEEGDVIIDVLGSDHKLAAEQVGIAVELLGGKRPEVIFYEFITLPEGSMSTRRGVFISVDELMDEAHSRALHEVKKRRDLPDDVADDIAESIGNGAIRYYIARLSPEKHIVFRWDDALSFERGCASIQYAHARACKLLEKASFTGEEDIEDGWKPEGDERELVRLLARFPVVVEESALARRVHPVAQYAQDLANTFNSFYRSTPVIGSDFEGARLRLVDSVRKTLRNALNLLGIHAPETM.

Residues 122 to 132 carry the 'HIGH' region motif; that stretch reads ANPNGPLHIGH.

This sequence belongs to the class-I aminoacyl-tRNA synthetase family.

It is found in the cytoplasm. The catalysed reaction is tRNA(Arg) + L-arginine + ATP = L-arginyl-tRNA(Arg) + AMP + diphosphate. The chain is Arginine--tRNA ligase (argS) from Methanothermobacter thermautotrophicus (strain ATCC 29096 / DSM 1053 / JCM 10044 / NBRC 100330 / Delta H) (Methanobacterium thermoautotrophicum).